Consider the following 663-residue polypeptide: DNA ligase (663 aa).

NAD(+) contacts are provided by residues D31–D35, S80–L81, and E110. The active-site N6-AMP-lysine intermediate is the K112. Positions 133, 168, 284, and 308 each coordinate NAD(+). Residues C402, C405, C420, and C425 each coordinate Zn(2+). One can recognise a BRCT domain in the interval I586 to E663.

This sequence belongs to the NAD-dependent DNA ligase family. LigA subfamily. The cofactor is Mg(2+). Mn(2+) is required as a cofactor.

It carries out the reaction NAD(+) + (deoxyribonucleotide)n-3'-hydroxyl + 5'-phospho-(deoxyribonucleotide)m = (deoxyribonucleotide)n+m + AMP + beta-nicotinamide D-nucleotide.. Its function is as follows. DNA ligase that catalyzes the formation of phosphodiester linkages between 5'-phosphoryl and 3'-hydroxyl groups in double-stranded DNA using NAD as a coenzyme and as the energy source for the reaction. It is essential for DNA replication and repair of damaged DNA. The protein is DNA ligase of Acetivibrio thermocellus (strain ATCC 27405 / DSM 1237 / JCM 9322 / NBRC 103400 / NCIMB 10682 / NRRL B-4536 / VPI 7372) (Clostridium thermocellum).